The following is a 194-amino-acid chain: Peptidyl-tRNA hydrolase (194 aa).

A tRNA-binding site is contributed by tyrosine 17. The Proton acceptor role is filled by histidine 22. TRNA is bound by residues tyrosine 68, asparagine 70, and asparagine 116.

It belongs to the PTH family. Monomer.

The protein resides in the cytoplasm. The catalysed reaction is an N-acyl-L-alpha-aminoacyl-tRNA + H2O = an N-acyl-L-amino acid + a tRNA + H(+). Its function is as follows. Hydrolyzes ribosome-free peptidyl-tRNAs (with 1 or more amino acids incorporated), which drop off the ribosome during protein synthesis, or as a result of ribosome stalling. Catalyzes the release of premature peptidyl moieties from peptidyl-tRNA molecules trapped in stalled 50S ribosomal subunits, and thus maintains levels of free tRNAs and 50S ribosomes. The protein is Peptidyl-tRNA hydrolase of Azotobacter vinelandii (strain DJ / ATCC BAA-1303).